The primary structure comprises 211 residues: Uridine kinase (211 aa).

13 to 20 is an ATP binding site; sequence GASASGKS.

This sequence belongs to the uridine kinase family.

Its subcellular location is the cytoplasm. It carries out the reaction uridine + ATP = UMP + ADP + H(+). The enzyme catalyses cytidine + ATP = CMP + ADP + H(+). The protein operates within pyrimidine metabolism; CTP biosynthesis via salvage pathway; CTP from cytidine: step 1/3. It participates in pyrimidine metabolism; UMP biosynthesis via salvage pathway; UMP from uridine: step 1/1. The polypeptide is Uridine kinase (Shewanella pealeana (strain ATCC 700345 / ANG-SQ1)).